Reading from the N-terminus, the 536-residue chain is Probable galacturonosyltransferase 10 (536 aa).

Over 1-16 (MRRRGGDSFRRAGRRK) the chain is Cytoplasmic. Residues 17–37 (ISNVVWWVLSGIALLLFFLIL) form a helical; Signal-anchor for type II membrane protein membrane-spanning segment. The Lumenal segment spans residues 38–536 (SKAGHIEPRP…SPFMQQCNFH (499 aa)). Asparagine 64, asparagine 246, asparagine 300, asparagine 403, and asparagine 436 each carry an N-linked (GlcNAc...) asparagine glycan.

The protein belongs to the glycosyltransferase 8 family. In terms of tissue distribution, expressed in roots, inflorescences, siliques, leaves and stems.

The protein localises to the golgi apparatus membrane. It functions in the pathway glycan metabolism; pectin biosynthesis. In terms of biological role, may be involved in pectin and/or xylans biosynthesis in cell walls. This chain is Probable galacturonosyltransferase 10 (GAUT10), found in Arabidopsis thaliana (Mouse-ear cress).